The primary structure comprises 466 residues: Prophage integrase IntF (466 aa).

Residues 134 to 239 (KTKVTFSVAW…LLRAFIKWSN (106 aa)) enclose the Core-binding (CB) domain. One can recognise a Tyr recombinase domain in the interval 268-445 (KADDCLQKEQ…PLDLLRKWHE (178 aa)). Residues R306, K328, H396, R399, and H422 contribute to the active site. The active-site O-(3'-phospho-DNA)-tyrosine intermediate is Y432.

The protein belongs to the 'phage' integrase family.

Its function is as follows. Integrase is necessary for integration of the phage into the host genome by site-specific recombination. In conjunction with excisionase, integrase is also necessary for excision of the prophage from the host genome. The protein is Prophage integrase IntF (intF) of Escherichia coli (strain K12).